Reading from the N-terminus, the 52-residue chain is UPF0057 membrane protein YqaE (52 aa).

The next 2 helical transmembrane spans lie at 1–21 and 23–43; these read MGFW…LLGK and FGWA…PGLI.

Belongs to the UPF0057 (PMP3) family.

It localises to the cell membrane. The polypeptide is UPF0057 membrane protein YqaE (yqaE) (Escherichia coli O157:H7).